The following is a 596-amino-acid chain: Elongation factor 4 (596 aa).

The tr-type G domain maps to 2 to 183 (KNIRNFSIIA…AIVRRVPAPD (182 aa)). GTP-binding positions include 14 to 19 (DHGKST) and 130 to 133 (NKID).

Belongs to the TRAFAC class translation factor GTPase superfamily. Classic translation factor GTPase family. LepA subfamily.

The protein localises to the cell inner membrane. The catalysed reaction is GTP + H2O = GDP + phosphate + H(+). Functionally, required for accurate and efficient protein synthesis under certain stress conditions. May act as a fidelity factor of the translation reaction, by catalyzing a one-codon backward translocation of tRNAs on improperly translocated ribosomes. Back-translocation proceeds from a post-translocation (POST) complex to a pre-translocation (PRE) complex, thus giving elongation factor G a second chance to translocate the tRNAs correctly. Binds to ribosomes in a GTP-dependent manner. In Campylobacter curvus (strain 525.92), this protein is Elongation factor 4.